We begin with the raw amino-acid sequence, 198 residues long: MTLRCLESSGNGAEGAQSQWGTAGSAEEPSPEAARLAKALRELSHTGWYWGSMTVNEAKEKLKEAPEGTFLIRDSSHSDYLLTISVKTSAGPTNLRIEYQDGKFRLDSIICVKSKLKQFDSVVHLIDYYVQMCKDKRTGPEAPRNGTVHLYLTKPLYTSAPPLQHLCRLTINKCTSTVWGLPLPTRLKDYLEEYKFQV.

The interval 1–75 (MTLRCLESSG…PEGTFLIRDS (75 aa)) is interaction with AREL1. The disordered stretch occupies residues 6–30 (LESSGNGAEGAQSQWGTAGSAEEPS). Over residues 8 to 22 (SSGNGAEGAQSQWGT) the composition is skewed to polar residues. A phosphoserine mark is found at Ser30 and Ser52. Residues 48-156 (WYWGSMTVNE…TVHLYLTKPL (109 aa)) form the SH2 domain. Residues 151-197 (YLTKPLYTSAPPLQHLCRLTINKCTSTVWGLPLPTRLKDYLEEYKFQ) form the SOCS box domain. Lys173 participates in a covalent cross-link: Glycyl lysine isopeptide (Lys-Gly) (interchain with G-Cter in ubiquitin).

In terms of assembly, substrate-recognition component of the ECS(SOCS2) complex, composed of SOCS2, CUL5, ELOB, ELOC and RNF7/RBX2. Interacts with IGF1R. Interacts with DCUN1D1. Post-translationally, ubiquitinated; mediated by AREL1 and leading to its subsequent proteasomal degradation. Ubiquitination is dependent on its phosphorylation at Ser-52, by PKC. Ubiquitination is stimulated by LPS. Phosphorylation at Ser-52 by PKC facilitates its ubiquitination and proteasomal degradation.

The protein resides in the cytoplasm. Its pathway is protein modification; protein ubiquitination. Its function is as follows. Substrate-recognition component of a cullin-5-RING E3 ubiquitin-protein ligase complex (ECS complex, also named CRL5 complex), which mediates the ubiquitination and subsequent proteasomal degradation of target proteins, such as EPOR and GHR. Specifically recognizes and binds phosphorylated proteins via its SH2 domain, promoting their ubiquitination. The ECS(SOCS2) complex acts as a key regulator of growth hormone receptor (GHR) levels by mediating ubiquitination and degradation of GHR, following GHR phosphorylation by JAK2. The ECS(SOCS2) also catalyzes ubiquitination and degradation of JAK2-phosphorylated EPOR. This is Suppressor of cytokine signaling 2 (SOCS2) from Bos taurus (Bovine).